We begin with the raw amino-acid sequence, 176 residues long: Urease accessory protein UreE (176 aa).

The interval 134 to 176 (FTPEGGAYGHGRTHAHEHGHTNHHGQHHDHADHGHSHDHSHDQ) is disordered. Positions 161 to 176 (HDHADHGHSHDHSHDQ) are enriched in basic and acidic residues.

Belongs to the UreE family.

The protein localises to the cytoplasm. In terms of biological role, involved in urease metallocenter assembly. Binds nickel. Probably functions as a nickel donor during metallocenter assembly. The sequence is that of Urease accessory protein UreE from Ruegeria sp. (strain TM1040) (Silicibacter sp.).